A 137-amino-acid polypeptide reads, in one-letter code: Large ribosomal subunit protein uL16 (137 aa).

Belongs to the universal ribosomal protein uL16 family. In terms of assembly, part of the 50S ribosomal subunit.

Binds 23S rRNA and is also seen to make contacts with the A and possibly P site tRNAs. In Bartonella bacilliformis (strain ATCC 35685 / KC583 / Herrer 020/F12,63), this protein is Large ribosomal subunit protein uL16.